Reading from the N-terminus, the 339-residue chain is tRNA N6-adenosine threonylcarbamoyltransferase (339 aa).

The Fe cation site is built by H111 and H115. Substrate-binding positions include 134–138 (LVSGG), D167, G180, and N274. Fe cation is bound at residue D302.

It belongs to the KAE1 / TsaD family. Requires Fe(2+) as cofactor.

The protein resides in the cytoplasm. The enzyme catalyses L-threonylcarbamoyladenylate + adenosine(37) in tRNA = N(6)-L-threonylcarbamoyladenosine(37) in tRNA + AMP + H(+). Functionally, required for the formation of a threonylcarbamoyl group on adenosine at position 37 (t(6)A37) in tRNAs that read codons beginning with adenine. Is involved in the transfer of the threonylcarbamoyl moiety of threonylcarbamoyl-AMP (TC-AMP) to the N6 group of A37, together with TsaE and TsaB. TsaD likely plays a direct catalytic role in this reaction. The polypeptide is tRNA N6-adenosine threonylcarbamoyltransferase (Methylobacillus flagellatus (strain ATCC 51484 / DSM 6875 / VKM B-1610 / KT)).